Consider the following 330-residue polypeptide: 2-methyl-6-phytyl-1,4-hydroquinone methyltransferase 1, chloroplastic (330 aa).

Residues 1-45 constitute a chloroplast transit peptide; sequence MKEMVSSSTFRAPGGLGFLGPSKIGLIPLRNRSGVRSRVKYIAPK. Residues 46–295 lie on the Chloroplast intermembrane side of the membrane; sequence CAVSSARPAS…DVEKPVNPFT (250 aa). The segment at 107–116 is SAM motif I; sequence VVDVGGGTGF. The interval 152–165 is SAM motif II; that stretch reads VNIIEGDAEDLPYP. Positions 193–206 are SAM motif III; the sequence is RVLKLGGVACLIGP. Residues 296–316 form a helical membrane-spanning segment; it reads FIFRFVMGTICASYYVLVPIY. The Stromal segment spans residues 317-330; it reads MWMKDQIVPKDQPI.

It belongs to the class I-like SAM-binding methyltransferase superfamily. MPBQ/MBSQ MT family.

It is found in the plastid. The protein resides in the chloroplast inner membrane. The catalysed reaction is 2-methyl-6-phytyl-1,4-benzene-1,4-diol + S-adenosyl-L-methionine = 2,3-dimethyl-6-phytylbenzene-1,4-diol + S-adenosyl-L-homocysteine + H(+). It carries out the reaction 2-methyl-6-(all-trans-nonaprenyl)benzene-1,4-diol + S-adenosyl-L-methionine = plastoquinol-9 + S-adenosyl-L-homocysteine + H(+). The enzyme catalyses 6-geranylgeranyl-2-methylbenzene-1,4-diol + S-adenosyl-L-methionine = 6-geranylgeranyl-2,3-dimethylbenzene-1,4-diol + S-adenosyl-L-homocysteine + H(+). Its pathway is cofactor biosynthesis; tocopherol biosynthesis. Its function is as follows. Involved in a key methylation step in both tocopherols (vitamin E) and plastoquinone synthesis. Catalyzes the conversion of 2-methyl-6-phytyl-1,4-hydroquinone (MPBQ) to 2,3-dimethyl-6-phytyl-1,4-hydroquinone (DMPQ, a substrate for tocopherol cyclase), and 2-methyl-6-solanyl-1,4-benzoquinone (MSBQ) to plastoquinone. The polypeptide is 2-methyl-6-phytyl-1,4-hydroquinone methyltransferase 1, chloroplastic (ARSM2) (Oryza sativa subsp. japonica (Rice)).